Here is a 511-residue protein sequence, read N- to C-terminus: Portal protein (511 aa).

The protein belongs to the Tevenvirinae portal protein family. Homododecamer. Interacts with the large terminase subunit. Interacts with the major capsid protein. Interacts with the capsid vertex protein.

Its subcellular location is the virion. Forms the portal vertex of the capsid. This portal plays critical roles in head assembly, genome packaging, neck/tail attachment, and genome ejection. The portal protein multimerizes as a single ring-shaped homododecamer arranged around a central channel. Binds to the terminase subunits to form the packaging machine. The protein is Portal protein of Vibrio phage KVP40 (isolate Vibrio parahaemolyticus/Japan/Matsuzaki/1991) (KVP40).